The sequence spans 220 residues: Protein DGCR6L (220 aa).

Residues 76–159 adopt a coiled-coil conformation; it reads KSLYNQRLRL…ADQQSTLEKA (84 aa).

This sequence belongs to the gonadal family. Widely expressed in fetal and adult tissues. Highest expression in liver, heart and skeletal muscle. Lower levels in pancreas and placenta. Weak expression in brain.

It is found in the nucleus. Functionally, may play a role in neural crest cell migration into the third and fourth pharyngeal pouches. The polypeptide is Protein DGCR6L (DGCR6L) (Homo sapiens (Human)).